Here is a 144-residue protein sequence, read N- to C-terminus: Endoribonuclease YbeY (144 aa).

Zn(2+) is bound by residues H108, H112, and H118.

Belongs to the endoribonuclease YbeY family. It depends on Zn(2+) as a cofactor.

The protein resides in the cytoplasm. Functionally, single strand-specific metallo-endoribonuclease involved in late-stage 70S ribosome quality control and in maturation of the 3' terminus of the 16S rRNA. This chain is Endoribonuclease YbeY, found in Phytoplasma australiense.